A 354-amino-acid polypeptide reads, in one-letter code: Homer protein homolog 2 (354 aa).

One can recognise a WH1 domain in the interval 1–110 (MGEQPIFTTR…EKFQEVREAA (110 aa)). Positions 92-120 (SEQQLTKFAEKFQEVREAARLARDKSQEK) form a coiled coil. The disordered stretch occupies residues 114–163 (RDKSQEKIETSSNHSQESGCETPSSTQASSVNGTDDEKASHASPADTHLK). Polar residues predominate over residues 123–146 (TSSNHSQESGCETPSSTQASSVNG). Residues 160–329 (THLKSENDKL…RHLKGELKSF (170 aa)) are a coiled coil.

This sequence belongs to the Homer family. As to quaternary structure, isoform 1 and isoform 2 encode coiled-coil structures that mediate homo- and heteromultimerization. Interacts with NFATC2; interaction is reduced by AKT activation. Interacts with NFATC1 and NFATC4. Interacts with DAGLA (via PPXXF motif); this interaction is required for the cell membrane localization of DAGLA. Constitutively expressed in the adult hippocampus.

Its subcellular location is the cytoplasm. The protein resides in the cell membrane. It is found in the postsynaptic density. The protein localises to the synapse. It localises to the cell projection. Its subcellular location is the stereocilium. Postsynaptic density scaffolding protein. Binds and cross-links cytoplasmic regions of GRM1, GRM5, ITPR1, DNM3, RYR1, RYR2, SHANK1 and SHANK3. By physically linking GRM1 and GRM5 with ER-associated ITPR1 receptors, it aids the coupling of surface receptors to intracellular calcium release. May also couple GRM1 to PI3 kinase through its interaction with AGAP2. Isoforms can be differently regulated and may play an important role in maintaining the plasticity at glutamatergic synapses. Required for normal hearing. Negatively regulates T cell activation by inhibiting the calcineurin-NFAT pathway. Acts by competing with calcineurin/PPP3CA for NFAT protein binding, hence preventing NFAT activation by PPP3CA. The protein is Homer protein homolog 2 of Rattus norvegicus (Rat).